We begin with the raw amino-acid sequence, 105 residues long: Meiotically up-regulated gene 52 protein (105 aa).

In terms of biological role, has a role in meiosis. The sequence is that of Meiotically up-regulated gene 52 protein (mug52) from Schizosaccharomyces pombe (strain 972 / ATCC 24843) (Fission yeast).